A 323-amino-acid polypeptide reads, in one-letter code: Queuosine 5'-phosphate N-glycosylase/hydrolase (323 aa).

Residues asparagine 72, tyrosine 93, lysine 199, phenylalanine 229, aspartate 231, aspartate 298, tryptophan 302, and glutamine 306 each contribute to the queuosine 5'-phosphate site. The Nucleophile or transition state stabilizer role is filled by aspartate 231.

The protein belongs to the QNG1 protein family. As to quaternary structure, monomer.

The enzyme catalyses queuosine 5'-phosphate + H2O = queuine + D-ribose 5-phosphate. Catalyzes the hydrolysis of queuosine 5'-phosphate, releasing the nucleobase queuine (q). Is likely required for salvage of queuine from exogenous queuosine (Q) that is imported and then converted to queuosine 5'-phosphate intracellularly. In vitro, can also catalyze the release of the q base directly from Q as substrate; however, Q may not be the biologically relevant substrate. Shows a very low activity on queuosine 3',5'-diphosphate, and cannot release q from queuosine 3'-phosphate and from the 5'-nucleotides AMP, UMP, CMP or GMP, indicating specificity for the queuine base. This is Queuosine 5'-phosphate N-glycosylase/hydrolase from Sphaerobacter thermophilus (strain ATCC 49802 / DSM 20745 / KCCM 41009 / NCIMB 13125 / S 6022).